The following is a 576-amino-acid chain: Aspartate--tRNA ligase (576 aa).

Glu-171 contributes to the L-aspartate binding site. The interval 195–198 is aspartate; that stretch reads QLFK. Arg-217 is an L-aspartate binding site. Residues 217-219 and Gln-226 contribute to the ATP site; that span reads RDE. An L-aspartate-binding site is contributed by His-450. ATP is bound at residue Glu-484. Arg-491 is a binding site for L-aspartate. Residue 536–539 coordinates ATP; it reads GLDR.

It belongs to the class-II aminoacyl-tRNA synthetase family. Type 1 subfamily. Homodimer.

It localises to the cytoplasm. It carries out the reaction tRNA(Asp) + L-aspartate + ATP = L-aspartyl-tRNA(Asp) + AMP + diphosphate. In terms of biological role, catalyzes the attachment of L-aspartate to tRNA(Asp) in a two-step reaction: L-aspartate is first activated by ATP to form Asp-AMP and then transferred to the acceptor end of tRNA(Asp). In Buchnera aphidicola subsp. Baizongia pistaciae (strain Bp), this protein is Aspartate--tRNA ligase.